A 174-amino-acid chain; its full sequence is Negative modulator of initiation of replication (174 aa).

The protein belongs to the SeqA family. In terms of assembly, homodimer. Polymerizes to form helical filaments.

It is found in the cytoplasm. Negative regulator of replication initiation, which contributes to regulation of DNA replication and ensures that replication initiation occurs exactly once per chromosome per cell cycle. Binds to pairs of hemimethylated GATC sequences in the oriC region, thus preventing assembly of replication proteins and re-initiation at newly replicated origins. Repression is relieved when the region becomes fully methylated. In Pseudoalteromonas atlantica (strain T6c / ATCC BAA-1087), this protein is Negative modulator of initiation of replication.